The following is a 129-amino-acid chain: Glycine cleavage system H protein (129 aa).

The Lipoyl-binding domain occupies 22–103; the sequence is TGTVGITDYA…AHTAWIMKIE (82 aa). Lys-63 carries the N6-lipoyllysine modification.

The protein belongs to the GcvH family. As to quaternary structure, the glycine cleavage system is composed of four proteins: P, T, L and H. Requires (R)-lipoate as cofactor.

Functionally, the glycine cleavage system catalyzes the degradation of glycine. The H protein shuttles the methylamine group of glycine from the P protein to the T protein. In Acidobacterium capsulatum (strain ATCC 51196 / DSM 11244 / BCRC 80197 / JCM 7670 / NBRC 15755 / NCIMB 13165 / 161), this protein is Glycine cleavage system H protein.